The chain runs to 648 residues: Acetyl-coenzyme A synthetase (648 aa).

CoA-binding positions include Arg-191–Arg-194, Thr-310, and Asn-334. ATP contacts are provided by residues Gly-386–Pro-388, Asp-410–Thr-415, Asp-499, and Arg-514. Residue Ser-522 coordinates CoA. Arg-525 lines the ATP pocket. The Mg(2+) site is built by Val-536, His-538, and Ile-541. Arg-583 is a binding site for CoA. Lys-608 carries the post-translational modification N6-acetyllysine.

Belongs to the ATP-dependent AMP-binding enzyme family. Requires Mg(2+) as cofactor. In terms of processing, acetylated. Deacetylation by the SIR2-homolog deacetylase activates the enzyme.

It catalyses the reaction acetate + ATP + CoA = acetyl-CoA + AMP + diphosphate. In terms of biological role, catalyzes the conversion of acetate into acetyl-CoA (AcCoA), an essential intermediate at the junction of anabolic and catabolic pathways. AcsA undergoes a two-step reaction. In the first half reaction, AcsA combines acetate with ATP to form acetyl-adenylate (AcAMP) intermediate. In the second half reaction, it can then transfer the acetyl group from AcAMP to the sulfhydryl group of CoA, forming the product AcCoA. The polypeptide is Acetyl-coenzyme A synthetase (Aeromonas hydrophila subsp. hydrophila (strain ATCC 7966 / DSM 30187 / BCRC 13018 / CCUG 14551 / JCM 1027 / KCTC 2358 / NCIMB 9240 / NCTC 8049)).